A 310-amino-acid polypeptide reads, in one-letter code: Tagatose-6-phosphate kinase (310 aa).

This sequence belongs to the carbohydrate kinase PfkB family. LacC subfamily.

It catalyses the reaction D-tagatofuranose 6-phosphate + ATP = D-tagatofuranose 1,6-bisphosphate + ADP + H(+). The protein operates within carbohydrate metabolism; D-tagatose 6-phosphate degradation; D-glyceraldehyde 3-phosphate and glycerone phosphate from D-tagatose 6-phosphate: step 1/2. This chain is Tagatose-6-phosphate kinase, found in Streptococcus agalactiae serotype V (strain ATCC BAA-611 / 2603 V/R).